The primary structure comprises 759 residues: DNA topoisomerase 4 subunit A (759 aa).

The Topo IIA-type catalytic domain occupies 44-516 (LPDVRDGLKP…VFGEAPQVDA (473 aa)). Tyr-132 functions as the O-(5'-phospho-DNA)-tyrosine intermediate in the catalytic mechanism.

It belongs to the type II topoisomerase GyrA/ParC subunit family. ParC type 1 subfamily. As to quaternary structure, heterotetramer composed of ParC and ParE.

It is found in the cell membrane. The catalysed reaction is ATP-dependent breakage, passage and rejoining of double-stranded DNA.. Functionally, topoisomerase IV is essential for chromosome segregation. It relaxes supercoiled DNA. Performs the decatenation events required during the replication of a circular DNA molecule. In Caulobacter vibrioides (strain ATCC 19089 / CIP 103742 / CB 15) (Caulobacter crescentus), this protein is DNA topoisomerase 4 subunit A.